Consider the following 129-residue polypeptide: uncharacterized protein (129 aa).

A helical membrane pass occupies residues 77 to 97 (ILAVFIISFIIVVVGVLLLGL). A disordered region spans residues 109-129 (SSNDKKLQSNDEEKQALAEKA). Basic and acidic residues predominate over residues 111–129 (NDKKLQSNDEEKQALAEKA).

The protein localises to the vacuole membrane. This is an uncharacterized protein from Saccharomyces cerevisiae (strain ATCC 204508 / S288c) (Baker's yeast).